The chain runs to 248 residues: NAD kinase (248 aa).

The active-site Proton acceptor is D45. NAD(+) is bound by residues 45–46, R50, 110–111, and D138; these read DG and NE.

It belongs to the NAD kinase family. It depends on a divalent metal cation as a cofactor.

It is found in the cytoplasm. It catalyses the reaction NAD(+) + ATP = ADP + NADP(+) + H(+). Involved in the regulation of the intracellular balance of NAD and NADP, and is a key enzyme in the biosynthesis of NADP. Catalyzes specifically the phosphorylation on 2'-hydroxyl of the adenosine moiety of NAD to yield NADP. The polypeptide is NAD kinase (Sulfurisphaera tokodaii (strain DSM 16993 / JCM 10545 / NBRC 100140 / 7) (Sulfolobus tokodaii)).